The sequence spans 223 residues: ATP phosphoribosyltransferase (223 aa).

The protein belongs to the ATP phosphoribosyltransferase family. Short subfamily. Heteromultimer composed of HisG and HisZ subunits.

The protein localises to the cytoplasm. The catalysed reaction is 1-(5-phospho-beta-D-ribosyl)-ATP + diphosphate = 5-phospho-alpha-D-ribose 1-diphosphate + ATP. It functions in the pathway amino-acid biosynthesis; L-histidine biosynthesis; L-histidine from 5-phospho-alpha-D-ribose 1-diphosphate: step 1/9. Its function is as follows. Catalyzes the condensation of ATP and 5-phosphoribose 1-diphosphate to form N'-(5'-phosphoribosyl)-ATP (PR-ATP). Has a crucial role in the pathway because the rate of histidine biosynthesis seems to be controlled primarily by regulation of HisG enzymatic activity. The polypeptide is ATP phosphoribosyltransferase (Bordetella bronchiseptica (strain ATCC BAA-588 / NCTC 13252 / RB50) (Alcaligenes bronchisepticus)).